The chain runs to 315 residues: Adenine deaminase (315 aa).

Residues histidine 14, histidine 16, and histidine 194 each contribute to the Zn(2+) site. Catalysis depends on glutamate 197, which acts as the Proton donor. Aspartate 275 serves as a coordination point for Zn(2+). Residue aspartate 276 participates in substrate binding.

This sequence belongs to the metallo-dependent hydrolases superfamily. Adenosine and AMP deaminases family. Adenine deaminase type 2 subfamily. Zn(2+) serves as cofactor.

It carries out the reaction adenine + H2O + H(+) = hypoxanthine + NH4(+). Its function is as follows. Catalyzes the hydrolytic deamination of adenine to hypoxanthine. Plays an important role in the purine salvage pathway and in nitrogen catabolism. In Ectopseudomonas mendocina (strain ymp) (Pseudomonas mendocina), this protein is Adenine deaminase.